Reading from the N-terminus, the 58-residue chain is Parvalbumin beta 3 (58 aa).

A1 carries the post-translational modification N-acetylalanine. Residues 24–58 (FNYKTFFKFFAIIDQDHSGFIEEEELKALSDAETK) enclose the EF-hand domain. Positions 37, 39, 41, 43, 45, and 48 each coordinate Ca(2+).

It belongs to the parvalbumin family.

Its function is as follows. In muscle, parvalbumin is thought to be involved in relaxation after contraction. It binds two calcium ions. This chain is Parvalbumin beta 3, found in Merluccius senegalensis (Senegalese hake).